Here is a 1404-residue protein sequence, read N- to C-terminus: DNA-directed RNA polymerase subunit beta' (1404 aa).

Cys-70, Cys-72, Cys-85, and Cys-88 together coordinate Zn(2+). Mg(2+) contacts are provided by Asp-460, Asp-462, and Asp-464. Positions 814, 888, 895, and 898 each coordinate Zn(2+).

This sequence belongs to the RNA polymerase beta' chain family. In terms of assembly, the RNAP catalytic core consists of 2 alpha, 1 beta, 1 beta' and 1 omega subunit. When a sigma factor is associated with the core the holoenzyme is formed, which can initiate transcription. It depends on Mg(2+) as a cofactor. The cofactor is Zn(2+).

The enzyme catalyses RNA(n) + a ribonucleoside 5'-triphosphate = RNA(n+1) + diphosphate. Its function is as follows. DNA-dependent RNA polymerase catalyzes the transcription of DNA into RNA using the four ribonucleoside triphosphates as substrates. The sequence is that of DNA-directed RNA polymerase subunit beta' from Shewanella halifaxensis (strain HAW-EB4).